Reading from the N-terminus, the 89-residue chain is Cytochrome c oxidase subunit 7A, mitochondrial (89 aa).

A mitochondrion-targeting transit peptide spans 1–31; that stretch reads MMNLSRAVVRSFATTAGRRSAAVPKDQIEKG. Over 32–58 the chain is Mitochondrial matrix; that stretch reads YFEIRKVQEHFQKKDGKPVFLKGSVVD. A helical membrane pass occupies residues 59 to 81; that stretch reads NVLYRVTVALALVGIGGMGKLFY. Residues 82 to 89 lie on the Mitochondrial intermembrane side of the membrane; sequence ELSVPKKE.

It belongs to the cytochrome c oxidase VIIa family. Component of the cytochrome c oxidase (complex IV, CIV), a multisubunit enzyme composed of a catalytic core of 3 subunits and several supernumerary subunits. The complex exists as a monomer or a dimer and forms supercomplexes (SCs) in the inner mitochondrial membrane with ubiquinol-cytochrome c oxidoreductase (cytochrome b-c1 complex, complex III, CIII).

The protein resides in the mitochondrion inner membrane. The protein operates within energy metabolism; oxidative phosphorylation. Its function is as follows. Component of the cytochrome c oxidase, the last enzyme in the mitochondrial electron transport chain which drives oxidative phosphorylation. The respiratory chain contains 3 multisubunit complexes succinate dehydrogenase (complex II, CII), ubiquinol-cytochrome c oxidoreductase (cytochrome b-c1 complex, complex III, CIII) and cytochrome c oxidase (complex IV, CIV), that cooperate to transfer electrons derived from NADH and succinate to molecular oxygen, creating an electrochemical gradient over the inner membrane that drives transmembrane transport and the ATP synthase. Cytochrome c oxidase is the component of the respiratory chain that catalyzes the reduction of oxygen to water. Electrons originating from reduced cytochrome c in the intermembrane space (IMS) are transferred via the dinuclear copper A center (CU(A)) of subunit 2 and heme A of subunit 1 to the active site in subunit 1, a binuclear center (BNC) formed by heme A3 and copper B (CU(B)). The BNC reduces molecular oxygen to 2 water molecules using 4 electrons from cytochrome c in the IMS and 4 protons from the mitochondrial matrix. The polypeptide is Cytochrome c oxidase subunit 7A, mitochondrial (Drosophila melanogaster (Fruit fly)).